Consider the following 176-residue polypeptide: Glutamyl-tRNA(Gln) amidotransferase subunit F, mitochondrial (176 aa).

It belongs to the GatF family. As to quaternary structure, subunit of the heterotrimeric GatFAB amidotransferase (AdT) complex, composed of A, B and F subunits.

The protein resides in the mitochondrion inner membrane. It carries out the reaction L-glutamyl-tRNA(Gln) + L-glutamine + ATP + H2O = L-glutaminyl-tRNA(Gln) + L-glutamate + ADP + phosphate + H(+). Functionally, allows the formation of correctly charged Gln-tRNA(Gln) through the transamidation of misacylated Glu-tRNA(Gln) in the mitochondria. The reaction takes place in the presence of glutamine and ATP through an activated gamma-phospho-Glu-tRNA(Gln). Required for proper protein synthesis within the mitochondrion. The protein is Glutamyl-tRNA(Gln) amidotransferase subunit F, mitochondrial of Yarrowia lipolytica (strain CLIB 122 / E 150) (Yeast).